The sequence spans 230 residues: Large ribosomal subunit protein uL1 (230 aa).

It belongs to the universal ribosomal protein uL1 family. As to quaternary structure, part of the 50S ribosomal subunit.

Its function is as follows. Binds directly to 23S rRNA. The L1 stalk is quite mobile in the ribosome, and is involved in E site tRNA release. Functionally, protein L1 is also a translational repressor protein, it controls the translation of the L11 operon by binding to its mRNA. This Leptospira biflexa serovar Patoc (strain Patoc 1 / Ames) protein is Large ribosomal subunit protein uL1.